A 1358-amino-acid polypeptide reads, in one-letter code: Phosphoinositide 3-kinase regulatory subunit 4 (1358 aa).

Gly2 carries the N-myristoyl glycine lipid modification. A Protein kinase domain is found at 26-324 (FEYDKSLGST…AFPEIFYTFL (299 aa)). Residues 32-40 (LGSTRFFKV) and Lys53 contribute to the ATP site. Residue Asp148 is the Proton acceptor of the active site. 3 HEAT repeats span residues 413–450 (ILLD…LVKE), 458–495 (IYPE…TALR), and 572–610 (KAND…YVGW). Phosphoserine is present on residues Ser808, Ser813, Ser853, and Ser865. The disordered stretch occupies residues 875–898 (LPKGSDQEVIQTGKPPRSESSAGI). WD repeat units lie at residues 991-1030 (EHKS…GKTT), 1040-1079 (RIGG…LPKS), 1093-1134 (KEDG…NAWT), 1139-1178 (LKSG…PISS), 1182-1223 (PSRA…RRFT), and 1237-1278 (PSPH…RSYV). Positions 1307 to 1326 (KQKVGPSDDTPRRGPESLPV) are disordered. Residues 1315–1326 (DTPRRGPESLPV) are compositionally biased toward basic and acidic residues. At Thr1316 the chain carries Phosphothreonine. The WD 7 repeat unit spans residues 1327-1358 (GHHDIITDVATFQTTQGFIVTASRDGIVKVWK).

It belongs to the protein kinase superfamily. Ser/Thr protein kinase family. As to quaternary structure, component of the PI3K (PI3KC3/PI3K-III/class III phosphatidylinositol 3-kinase) complex the core of which is composed of the catalytic subunit PIK3C3, the regulatory subunit PIK3R4 and BECN1 associating with additional regulatory/auxiliary subunits to form alternative complex forms. Alternative complex forms containing a fourth regulatory subunit in a mutually exclusive manner are PI3K complex I (PI3KC3-C1) containing ATG14, and PI3K complex II (PI3KC3-C2) containing UVRAG. PI3KC3-C1 displays a V-shaped architecture with PIK3R4 serving as a bridge between PIK3C3 and the ATG14:BECN1 subcomplex. Both, PI3KC3-C1 and PI3KC3-C2, can associate with further regulatory subunits, such as RUBCN, SH3GLB1/Bif-1, AMBRA1 and NRBF2. PI3KC3-C1 probably associates with PIK3CB. Interacts with RAB7A in the presence of PIK3C3/VPS34. Interacts with NRBF2. Interacts with ARMC3. It depends on Mn(2+) as a cofactor. Myristoylated. In terms of processing, probably autophosphorylated. As to expression, ubiquitously expressed.

The protein resides in the late endosome. It is found in the cytoplasmic vesicle. The protein localises to the autophagosome. Its subcellular location is the membrane. The catalysed reaction is L-seryl-[protein] + ATP = O-phospho-L-seryl-[protein] + ADP + H(+). It carries out the reaction L-threonyl-[protein] + ATP = O-phospho-L-threonyl-[protein] + ADP + H(+). Its function is as follows. Regulatory subunit of the PI3K complex that mediates formation of phosphatidylinositol 3-phosphate; different complex forms are believed to play a role in multiple membrane trafficking pathways: PI3KC3-C1 is involved in initiation of autophagosomes and PI3KC3-C2 in maturation of autophagosomes and endocytosis. Involved in regulation of degradative endocytic trafficking and cytokinesis, probably in the context of PI3KC3-C2. The protein is Phosphoinositide 3-kinase regulatory subunit 4 (PIK3R4) of Homo sapiens (Human).